The following is a 1107-amino-acid chain: uncharacterized protein (1107 aa).

Residues 180-204 (SGNGSSGGNNNNNNNSLNNSNNSIG) show a composition bias toward low complexity. Disordered stretches follow at residues 180 to 251 (SGNG…SGNN) and 501 to 530 (LMNI…DNQM). Residues 205–215 (SSGGNGGGGSN) are compositionally biased toward gly residues. Residues 219–237 (PSMSPQFTSISKTNSPQII) are compositionally biased toward polar residues. 2 stretches are compositionally biased toward low complexity: residues 238 to 251 (NTSS…SGNN) and 501 to 521 (LMNI…NNND). Coiled coils occupy residues 789–816 (KKDI…IYRE) and 940–1012 (NIDH…NMLK).

This is an uncharacterized protein from Dictyostelium discoideum (Social amoeba).